The sequence spans 567 residues: Cytochrome P450 monooxygenase 79 (567 aa).

Residues 7–24 (ELAILAIVLLVTAVVFYT) form a helical membrane-spanning segment. 2 N-linked (GlcNAc...) asparagine glycosylation sites follow: Asn-223 and Asn-279. Cys-475 contributes to the heme binding site.

The protein belongs to the cytochrome P450 family. Heme is required as a cofactor.

It is found in the membrane. It participates in secondary metabolite biosynthesis. Cytochrome P450 monooxygenase that is able to use dehydroabietic acid as a substrate for oxidation. This chain is Cytochrome P450 monooxygenase 79, found in Postia placenta (strain ATCC 44394 / Madison 698-R) (Brown rot fungus).